The chain runs to 156 residues: Small ribosomal subunit protein uS7 (156 aa).

It belongs to the universal ribosomal protein uS7 family. In terms of assembly, part of the 30S ribosomal subunit. Contacts proteins S9 and S11.

Functionally, one of the primary rRNA binding proteins, it binds directly to 16S rRNA where it nucleates assembly of the head domain of the 30S subunit. Is located at the subunit interface close to the decoding center, probably blocks exit of the E-site tRNA. In Parasynechococcus marenigrum (strain WH8102), this protein is Small ribosomal subunit protein uS7.